The following is a 391-amino-acid chain: Yellow-related salivary protein ASP4 (391 aa).

The first 18 residues, 1 to 18, serve as a signal peptide directing secretion; the sequence is MKIFLCIIAVVSLQGVVA. N-linked (GlcNAc...) asparagine glycosylation occurs at Asn-29.

This sequence belongs to the major royal jelly protein family. In terms of tissue distribution, female salivary gland (at protein level).

The protein localises to the secreted. Its function is as follows. Probably modulates blood feeding of sand flies on vertebrate species by binding and sequestering different mediators involved in the host response. Binds biogenic amines. Binds serotonin and dopamine with high affinity. Binds adrenaline, octopamine and adrenaline with medium affinity. Binds histamine with low affinity. The polypeptide is Yellow-related salivary protein ASP4 (Phlebotomus orientalis (Phlebotomine sand fly)).